Here is a 144-residue protein sequence, read N- to C-terminus: Cytochrome c-type biogenesis protein CcmE (144 aa).

At 1–7 (MKPRHKR) the chain is on the cytoplasmic side. Residues 8 to 28 (ALIIIAALIAIGVAALLILNA) traverse the membrane as a helical; Signal-anchor for type II membrane protein segment. Topologically, residues 29 to 144 (LNSNIALYVT…DQAQKNGSAK (116 aa)) are periplasmic. Heme contacts are provided by His-121 and Tyr-125.

This sequence belongs to the CcmE/CycJ family.

Its subcellular location is the cell inner membrane. In terms of biological role, heme chaperone required for the biogenesis of c-type cytochromes. Transiently binds heme delivered by CcmC and transfers the heme to apo-cytochromes in a process facilitated by CcmF and CcmH. The protein is Cytochrome c-type biogenesis protein CcmE of Polynucleobacter necessarius subsp. necessarius (strain STIR1).